The chain runs to 178 residues: NADH-quinone oxidoreductase subunit I 2 (178 aa).

2 4Fe-4S ferredoxin-type domains span residues 46–78 (IVLT…MQAA) and 88–117 (AWFR…LTPF). Residues Cys58, Cys61, Cys64, Cys68, Cys97, Cys100, Cys103, and Cys107 each contribute to the [4Fe-4S] cluster site.

The protein belongs to the complex I 23 kDa subunit family. As to quaternary structure, NDH-1 is composed of 14 different subunits. Subunits NuoA, H, J, K, L, M, N constitute the membrane sector of the complex. [4Fe-4S] cluster serves as cofactor.

It localises to the cell inner membrane. It catalyses the reaction a quinone + NADH + 5 H(+)(in) = a quinol + NAD(+) + 4 H(+)(out). NDH-1 shuttles electrons from NADH, via FMN and iron-sulfur (Fe-S) centers, to quinones in the respiratory chain. The immediate electron acceptor for the enzyme in this species is believed to be ubiquinone. Couples the redox reaction to proton translocation (for every two electrons transferred, four hydrogen ions are translocated across the cytoplasmic membrane), and thus conserves the redox energy in a proton gradient. The protein is NADH-quinone oxidoreductase subunit I 2 of Syntrophobacter fumaroxidans (strain DSM 10017 / MPOB).